A 335-amino-acid chain; its full sequence is L-lactate dehydrogenase B chain (335 aa).

NAD(+)-binding positions include 29–57 (GQVG…VEDK) and arginine 99. Positions 106, 138, and 169 each coordinate substrate. Asparagine 138 is a binding site for NAD(+). Histidine 193 serves as the catalytic Proton acceptor. Threonine 248 provides a ligand contact to substrate.

It belongs to the LDH/MDH superfamily. LDH family. In terms of assembly, homotetramer.

Its subcellular location is the cytoplasm. The catalysed reaction is (S)-lactate + NAD(+) = pyruvate + NADH + H(+). It participates in fermentation; pyruvate fermentation to lactate; (S)-lactate from pyruvate: step 1/1. In terms of biological role, interconverts simultaneously and stereospecifically pyruvate and lactate with concomitant interconversion of NADH and NAD(+). This Sceloporus undulatus (Eastern fence lizard) protein is L-lactate dehydrogenase B chain (LDHB).